A 535-amino-acid polypeptide reads, in one-letter code: Xylan 1,3-beta-xylosidase (535 aa).

Catalysis depends on aspartate 16, which acts as the Proton acceptor. Catalysis depends on glutamate 189, which acts as the Proton donor.

Belongs to the glycosyl hydrolase 43 family.

It catalyses the reaction Hydrolysis of successive xylose residues from the non-reducing termini of (1-&gt;3)-beta-D-xylans.. Inhibited by Ag(+), Cu(2+), Hg(2+), Mn(2+), Pb(2+), Zn(2+) and p-chloromercuric benzoic acid. In terms of biological role, beta-1,3-xylosidase that hydrolyzes beta-1,3-xylooligosaccharides to D-xylose. In Vibrio sp, this protein is Xylan 1,3-beta-xylosidase (xloA).